The sequence spans 132 residues: MIRFFAFVLFFATQELILCNNLPCDASDIAYEEITTQAGTQTNTFCDCQTETYKFSTGTSTDKQTTTVKYKCKKIRACVYAQKCGSLDVKPEENVLSTFCTCADGQVCHDTPEYADETRTFGDTKYHSFVCT.

The N-terminal stretch at 1–19 (MIRFFAFVLFFATQELILC) is a signal peptide.

The protein belongs to the scoloptoxin-11 family. Contains 5 disulfide bonds. As to expression, expressed by the venom gland.

The protein localises to the secreted. The polypeptide is U-scoloptoxin(11)-Sa1a (Scolopendra alternans (Florida Keys giant centipede)).